The following is a 346-amino-acid chain: Nuclear distribution protein nudE-like 1 (346 aa).

Residues 13–190 (KEEIVYWREL…LAVRERQTNG (178 aa)) adopt a coiled-coil conformation. Disordered stretches follow at residues 184–205 (RERQ…DCDK) and 325–346 (YDPP…PLSV). Positions 188-200 (TNGTRKSAPSSPT) are enriched in polar residues. The span at 335-346 (PPSPPGMLPLSV) shows a compositional bias: pro residues.

It belongs to the nudE family. Post-translationally, phosphorylated in mitosis.

It is found in the cytoplasm. It localises to the cytoskeleton. The protein localises to the microtubule organizing center. The protein resides in the centrosome. Its subcellular location is the spindle. Functionally, required for organization of the cellular microtubule array and microtubule anchoring at the centrosome. Positively regulates the activity of the minus-end directed microtubule motor protein dynein. May enhance dynein-mediated microtubule sliding by targeting dynein to the microtubule plus end. Positively regulates lysosome peripheral distribution and ruffled border formation in osteoclasts. This Xenopus tropicalis (Western clawed frog) protein is Nuclear distribution protein nudE-like 1 (ndel1).